Reading from the N-terminus, the 392-residue chain is Protein O-glucosyltransferase 1 (392 aa).

Residues 1–23 form the signal peptide; it reads MERLSGCRLRPWMLLLLLFPVQG. 4 disulfides stabilise this stretch: Cys-49-Cys-56, Cys-54-Cys-357, Cys-102-Cys-108, and Cys-263-Cys-286. Asn-53 carries N-linked (GlcNAc...) asparagine glycosylation. Residues 103–107 are interaction with the consensus sequence C-X-S-X-[PA]-C in peptide substrates; it reads MFPSR. Asp-133 serves as the catalytic Proton donor/acceptor. Residues 172-178 form an interaction with the consensus sequence C-X-S-X-[PA]-C in peptide substrates region; it reads AVWPLYP. Tyr-177 serves as a coordination point for UDP-alpha-D-glucose. N-linked (GlcNAc...) asparagine glycosylation occurs at Asn-204. UDP-alpha-D-glucose contacts are provided by residues Ser-212, Arg-218, and 274-279; that span reads VAASFR. Residue Asn-373 is glycosylated (N-linked (GlcNAc...) asparagine). The Prevents secretion from ER motif lies at 389–392; it reads KTEL.

Belongs to the glycosyltransferase 90 family.

It localises to the endoplasmic reticulum lumen. It catalyses the reaction L-seryl-[EGF-like domain protein] + UDP-alpha-D-xylose = 3-O-(beta-D-xylosyl)-L-seryl-[EGF-like domain protein] + UDP + H(+). It carries out the reaction L-seryl-[EGF-like domain protein] + UDP-alpha-D-glucose = 3-O-(beta-D-glucosyl)-L-seryl-[EGF-like domain protein] + UDP + H(+). Its pathway is protein modification; protein glycosylation. Functionally, dual specificity glycosyltransferase that catalyzes the transfer of glucose and xylose from UDP-glucose and UDP-xylose, respectively, to a serine residue found in the consensus sequence of C-X-S-X-P-C. Specifically targets extracellular EGF repeats of protein such as CRB2, F7, F9 and NOTCH2. Acts as a positive regulator of Notch signaling by mediating O-glucosylation of Notch, leading to regulate muscle development. Notch glucosylation does not affect Notch ligand binding. Required during early development to promote gastrulation: acts by mediating O-glucosylation of CRB2, which is required for CRB2 localization to the cell membrane. This Rattus norvegicus (Rat) protein is Protein O-glucosyltransferase 1 (Poglut1).